Here is a 113-residue protein sequence, read N- to C-terminus: Nucleoid-associated protein EUBREC_0329 (113 aa).

Residues 1–12 (MARRGGFPGGMP) are compositionally biased toward gly residues. Residues 1–45 (MARRGGFPGGMPGNMNNLMKQAQKMQRQMEEAQKQLEDAEVTAKA) form a disordered region. Over residues 27-37 (RQMEEAQKQLE) the composition is skewed to basic and acidic residues.

It belongs to the YbaB/EbfC family. In terms of assembly, homodimer.

It is found in the cytoplasm. It localises to the nucleoid. Functionally, binds to DNA and alters its conformation. May be involved in regulation of gene expression, nucleoid organization and DNA protection. The sequence is that of Nucleoid-associated protein EUBREC_0329 from Agathobacter rectalis (strain ATCC 33656 / DSM 3377 / JCM 17463 / KCTC 5835 / VPI 0990) (Eubacterium rectale).